The following is a 394-amino-acid chain: Elongation factor Tu (394 aa).

Residues 10 to 204 (KPHINIGTIG…AVDDNIPTPE (195 aa)) enclose the tr-type G domain. Residues 19–26 (GHVDHGKT) are G1. 19–26 (GHVDHGKT) is a GTP binding site. Mg(2+) is bound at residue T26. The G2 stretch occupies residues 60–64 (GITIN). Residues 81–84 (DCPG) are G3. GTP contacts are provided by residues 81–85 (DCPGH) and 136–139 (NKID). Residues 136-139 (NKID) are G4. Residues 174–176 (SAL) form a G5 region.

This sequence belongs to the TRAFAC class translation factor GTPase superfamily. Classic translation factor GTPase family. EF-Tu/EF-1A subfamily. Monomer.

It localises to the cytoplasm. The enzyme catalyses GTP + H2O = GDP + phosphate + H(+). GTP hydrolase that promotes the GTP-dependent binding of aminoacyl-tRNA to the A-site of ribosomes during protein biosynthesis. This is Elongation factor Tu from Chlamydia felis (strain Fe/C-56) (Chlamydophila felis).